A 524-amino-acid chain; its full sequence is MALQKFPLLGLLFLITIVVSSTIAVDDPVCPTTSKLSRASFPNGFVFGTATAAFQVEGAINETCRGPALWDIFCKRNPERCSGHNADVAVDFFHRYKEDIQLMKNLNTDAFRLSIAWSRIFPHGRKEKGVSQAGVKFYHDLIDELLKNGIIPFVTVFHWDTPQDLEDEYGGFLSENIVKDFREYADYVFTEYGGKVKNWITFNEPWVFAHAGYDVGKKAPGRCSRYLKGCEDRDGRSGYEAYLVSHNLLNAHAEAVEVFRQKVKGGKIGIAHSPAWFEPHDLKDSNDVPTVSRVLDFMLGWHLDPTTFGDYPQIMKDLLGHRLPKFTSSQKAKLKDSTDFVGLNYYTSTFSNHNEKPDPSTPSWKQDSLVAWEPKNVDHSAIGSQPLTAALPVYAKGFRSLLKYIKDKYANPEIMIMENGYGDKLKDKDSVEVGTADYNRKYYLQRHLLAMNEAICIDKVRVTGYFVWSLLDNFEWQDGYNNRFGLYYVDFKNNLTRYEKESAKYYKDFLGQGVRPSALKKDEL.

An N-terminal signal peptide occupies residues 1–24 (MALQKFPLLGLLFLITIVVSSTIA). Gln-55 is an a beta-D-glucoside binding site. An N-linked (GlcNAc...) asparagine glycan is attached at Asn-61. A beta-D-glucoside is bound by residues His-158 and 203–204 (NE). The active-site Proton donor is Glu-204. Cys-223 and Cys-230 are joined by a disulfide. A beta-D-glucoside-binding positions include Tyr-346, Glu-418, Trp-468, 475–476 (EW), and Phe-484. Glu-418 serves as the catalytic Nucleophile. Asn-494 carries N-linked (GlcNAc...) asparagine glycosylation. Residues 521-524 (KDEL) carry the Prevents secretion from ER motif.

Belongs to the glycosyl hydrolase 1 family. In terms of assembly, component of the PYK10 complex, at least composed of PYK10/BGLU23, BGLU21, BGLU22, JAL22, JAL23, PBP1/JAL30, PBP2/JAL31, JAL32, JAL33, JAL34, JAL35, GLL22 and GLL23. In terms of tissue distribution, expressed exclusively in roots.

Its subcellular location is the endoplasmic reticulum lumen. The catalysed reaction is Hydrolysis of terminal, non-reducing beta-D-glucosyl residues with release of beta-D-glucose.. Its activity is regulated as follows. Activated upon binding to PBP1 or PBP2. In terms of biological role, beta-D-glucosidase active on scopolin &gt;&gt; esculin &gt;&gt; 4-MU-glucoside. No activity with DIMBOA-glucoside, pNP-glucoside, oNP-glucoside and sinigrin as substrates. The polypeptide is Beta-glucosidase 22 (Arabidopsis thaliana (Mouse-ear cress)).